A 1092-amino-acid chain; its full sequence is Extended synaptotagmin-1 (1092 aa).

Residue Met-1 is modified to N-acetylmethionine. At 1 to 28 the chain is on the cytoplasmic side; it reads MEHSPEEGASPEPSGQPPATDSTRDGGS. Residues 1–36 form a disordered region; the sequence is MEHSPEEGASPEPSGQPPATDSTRDGGSGVPPAGPG. A helical transmembrane segment spans residues 29–49; sequence GVPPAGPGAASEALAVLTSFG. Residues 50 to 52 lie on the Lumenal side of the membrane; sequence RRL. The chain crosses the membrane as a helical span at residues 53 to 73; that stretch reads LVLVPVYLAGAAGLSVGFVLF. The Cytoplasmic portion of the chain corresponds to 74–1092; the sequence is GLALYLGWRR…LMDDRDKGGS (1019 aa). The 179-residue stretch at 125–303 folds into the SMP-LTD domain; the sequence is DVEKAEWLNK…LPNRLLVPLV (179 aa). 4 C2 domains span residues 302-423, 444-570, 616-738, and 769-886; these read LVPD…DNWY, DAEK…QLSS, DAPP…DEWL, and QVNS…ALSG. The residue at position 314 (Ser-314) is a Phosphoserine; by CDK5. Residues Lys-334, Asp-335, Asp-347, Asp-394, Asp-396, Asp-398, Asp-400, and Asp-401 each contribute to the Ca(2+) site. Residues 604–628 are disordered; the sequence is WDRESLETGSSVDAPPRPYHTTPNS. An N6-acetyllysine modification is found at Lys-804. The residue at position 807 (Ser-807) is a Phosphoserine. The disordered stretch occupies residues 909 to 937; that stretch reads HSHSYSHSHSSSSLNDEPEALGGPTHPAS. Low complexity predominate over residues 911-921; that stretch reads HSYSHSHSSSS. A phosphoserine mark is found at Ser-937 and Ser-951. The C2 5 domain maps to 959-1081; the sequence is PLGQVKLTVW…DLSQGAAQWY (123 aa). Phosphotyrosine is present on Tyr-997. The interval 1006–1013 is required for phosphatidylinositol 4,5-bisphosphate-dependent location at the cell membrane; that stretch reads KNRSTKRK.

It belongs to the extended synaptotagmin family. Interacts with ESYT2 and ESYT3. Interacts with ADGRD1; inhibiting the G-protein-coupled receptor activity of ADGRD1. Interaction with ADGRD1 is abolished when cytosolic calcium increases, relieving ADGRD1 G-protein-coupled receptor activity. Interacts (phosphorylated form) with SLC2A4. Phosphorylated on Ser residues in insulin-treated adipocytes (in vitro); this promotes interaction with SLC2A4.

Its subcellular location is the endoplasmic reticulum membrane. It localises to the cell membrane. In terms of biological role, binds calcium (via the C2 domains) and translocates to sites of contact between the endoplasmic reticulum and the cell membrane in response to increased cytosolic calcium levels. Helps tether the endoplasmic reticulum to the cell membrane and promotes the formation of appositions between the endoplasmic reticulum and the cell membrane. Acts as an inhibitor of ADGRD1 G-protein-coupled receptor activity in absence of cytosolic calcium. Binds glycerophospholipids in a barrel-like domain and may play a role in cellular lipid transport. In Mus musculus (Mouse), this protein is Extended synaptotagmin-1 (Esyt1).